Here is a 724-residue protein sequence, read N- to C-terminus: NAD(+) hydrolase SARM1 (724 aa).

The N-terminal 27 residues, 1–27 (MVLTLLFSAYKLCRFFIMSGPRPGADR), are a transit peptide targeting the mitochondrion. An ARM 1 repeat occupies 60 to 100 (EVQGALERSLPELQQALSELKQASAAQAVGAGLAEVFQLVE). NAD(+) contacts are provided by residues Trp-103, Arg-110, 149–157 (EQILVAENR), and 190–193 (HMFK). ARM repeat units follow at residues 114–153 (QGLC…QILV), 155–193 (ENRD…HMFK), 196–235 (EETC…NCAL), 237–280 (GGQT…LATN), 281–314 (KEVE…CLVD), 315–354 (ASDT…AEAA), and 359–402 (QGKT…EEVP). 2 SAM domains span residues 412–476 (WKEA…LKTF) and 486–548 (NLAD…MLHS). A phosphoserine mark is found at Ser-548 and Ser-558. Positions 560-703 (DTPDVFISYR…KIIRFLQGRP (144 aa)) constitute a TIR domain. NAD(+) is bound by residues 569 to 570 (RR) and Glu-599. Glu-642 is an active-site residue. Over residues 703 to 717 (PSQDSSAGSDTSLEG) the composition is skewed to polar residues. The interval 703–724 (PSQDSSAGSDTSLEGATSMGLP) is disordered.

The protein belongs to the SARM1 family. Homooctamer; forms an octameric ring via SAM domains. Interacts with TICAM1/TRIF and thereby interferes with TICAM1/TRIF function. Interacts with MAPK10/JNK3 and SDC2 (via cytoplasmic domain). Phosphorylation at Ser-548 by JNK kinases (MAPK8, MAPK9 and /or MAPK10) enhance the NAD(+) hydrolase (NADase) activity. Phosphorylation at Ser-548 and subsequent activation takes place in response to oxidative stress conditions and inhibits mitochondrial respiration. Phosphorylation at Ser-548 increases in response to cerebral ischemia/reperfusion (I/R) injury.

It is found in the cytoplasm. The protein resides in the cell projection. The protein localises to the axon. Its subcellular location is the dendrite. It localises to the synapse. It is found in the mitochondrion. The enzyme catalyses NAD(+) + H2O = ADP-D-ribose + nicotinamide + H(+). The catalysed reaction is NAD(+) = cyclic ADP-beta-D-ribose + nicotinamide + H(+). It carries out the reaction NADP(+) + H2O = ADP-D-ribose 2'-phosphate + nicotinamide + H(+). Its activity is regulated as follows. Autoinhibited: in the inactive state, the enzymatic TIR domain is held apart by the autoinhibiting ARM repeats. NAD(+)-binding to ARM repeats maintains an inactive state by promoting interaction between ARM repeats and the TIR domain, thereby facilitating inhibition of the enzymatic TIR domain. Following activation, possibly by nicotinamide mononucleotide (NMN), auto-inhibitory interactions are released, allowing self-association of the TIR domains and subsequent activation of the NAD(+) hydrolase (NADase) activity. Self-association of TIR domains is facilitated by the octamer of SAM domains. Its function is as follows. NAD(+) hydrolase, which plays a key role in axonal degeneration following injury by regulating NAD(+) metabolism. Acts as a negative regulator of MYD88- and TRIF-dependent toll-like receptor signaling pathway by promoting Wallerian degeneration, an injury-induced form of programmed subcellular death which involves degeneration of an axon distal to the injury site. Wallerian degeneration is triggered by NAD(+) depletion: in response to injury, SARM1 is activated and catalyzes cleavage of NAD(+) into ADP-D-ribose (ADPR), cyclic ADPR (cADPR) and nicotinamide; NAD(+) cleavage promoting cytoskeletal degradation and axon destruction. Also able to hydrolyze NADP(+), but not other NAD(+)-related molecules. Can activate neuronal cell death in response to stress. Regulates dendritic arborization through the MAPK4-JNK pathway. Involved in innate immune response: inhibits both TICAM1/TRIF- and MYD88-dependent activation of JUN/AP-1, TRIF-dependent activation of NF-kappa-B and IRF3, and the phosphorylation of MAPK14/p38. This is NAD(+) hydrolase SARM1 from Rattus norvegicus (Rat).